Reading from the N-terminus, the 115-residue chain is uncharacterized protein (115 aa).

To M.tuberculosis Rv3073c.

This is an uncharacterized protein from Escherichia coli (strain K12).